The following is a 204-amino-acid chain: Glycerol-3-phosphate acyltransferase (204 aa).

The next 5 helical transmembrane spans lie at 8 to 28 (ILIF…CYIF), 53 to 73 (VPAA…VVIA), 81 to 101 (FITA…IFFG), 116 to 136 (FGFS…VAII), and 155 to 175 (VIFT…IIIL).

The protein belongs to the PlsY family. In terms of assembly, probably interacts with PlsX.

The protein resides in the cell inner membrane. It catalyses the reaction an acyl phosphate + sn-glycerol 3-phosphate = a 1-acyl-sn-glycero-3-phosphate + phosphate. It participates in lipid metabolism; phospholipid metabolism. In terms of biological role, catalyzes the transfer of an acyl group from acyl-phosphate (acyl-PO(4)) to glycerol-3-phosphate (G3P) to form lysophosphatidic acid (LPA). This enzyme utilizes acyl-phosphate as fatty acyl donor, but not acyl-CoA or acyl-ACP. This Francisella tularensis subsp. mediasiatica (strain FSC147) protein is Glycerol-3-phosphate acyltransferase.